A 249-amino-acid polypeptide reads, in one-letter code: Uridylate kinase (249 aa).

An ATP-binding site is contributed by 23–26 (KISG). The tract at residues 31 to 36 (GDQGFG) is involved in allosteric activation by GTP. Gly65 lines the UMP pocket. Residues Gly66 and Arg70 each contribute to the ATP site. UMP-binding positions include Asp85 and 146–153 (TGNPYFTT). 3 residues coordinate ATP: Thr173, Tyr179, and Asp182.

This sequence belongs to the UMP kinase family. In terms of assembly, homohexamer.

Its subcellular location is the cytoplasm. The enzyme catalyses UMP + ATP = UDP + ADP. The protein operates within pyrimidine metabolism; CTP biosynthesis via de novo pathway; UDP from UMP (UMPK route): step 1/1. With respect to regulation, allosterically activated by GTP. Inhibited by UTP. Functionally, catalyzes the reversible phosphorylation of UMP to UDP. The protein is Uridylate kinase of Jannaschia sp. (strain CCS1).